The chain runs to 747 residues: DNA-directed RNA polymerase subunit beta' (747 aa).

Cys70, Cys72, Cys97, and Cys100 together coordinate Zn(2+). Mg(2+)-binding residues include Asp502, Asp504, and Asp506.

This sequence belongs to the RNA polymerase beta' chain family. RpoC1 subfamily. In terms of assembly, in plastids the minimal PEP RNA polymerase catalytic core is composed of four subunits: alpha, beta, beta', and beta''. When a (nuclear-encoded) sigma factor is associated with the core the holoenzyme is formed, which can initiate transcription. The cofactor is Mg(2+). Zn(2+) is required as a cofactor.

It localises to the plastid. Its subcellular location is the chloroplast. It catalyses the reaction RNA(n) + a ribonucleoside 5'-triphosphate = RNA(n+1) + diphosphate. In terms of biological role, DNA-dependent RNA polymerase catalyzes the transcription of DNA into RNA using the four ribonucleoside triphosphates as substrates. This Gnetum parvifolium (Small-leaved jointfir) protein is DNA-directed RNA polymerase subunit beta'.